The following is a 276-amino-acid chain: Protein HemX (276 aa).

Transmembrane regions (helical) follow at residues 9-29 (LNEGTIVIYALSVLFYFIDFL), 40-60 (FWLLSIVWTLQTVYLAYFMWV), 66-86 (VLNVTEALYFYAWVLVTLSLV), 93-113 (VDFIVFFTNVIGFSMIAIHTF), 132-152 (LVIHITMAILSYGAFSLSFVF), 187-207 (VLNVIGVPMLLLSLILGVIWA), 217-237 (FDAKVLGSFVVLLLYSYYLYI), and 247-267 (VAALWNTACFLVLMINYFLLG).

This sequence to M.leprae U1620K.

It is found in the cell membrane. Functionally, required for HemL synthesis. This Bacillus subtilis (strain 168) protein is Protein HemX (hemX).